We begin with the raw amino-acid sequence, 197 residues long: dITP/XTP pyrophosphatase (197 aa).

8–13 (TGNAGK) contacts substrate. Residues Glu-40 and Asp-69 each coordinate Mg(2+). The active-site Proton acceptor is Asp-69. Residues Ser-70, 154–157 (FGYD), Lys-177, and 182–183 (HR) each bind substrate.

This sequence belongs to the HAM1 NTPase family. Homodimer. It depends on Mg(2+) as a cofactor.

It catalyses the reaction XTP + H2O = XMP + diphosphate + H(+). The catalysed reaction is dITP + H2O = dIMP + diphosphate + H(+). It carries out the reaction ITP + H2O = IMP + diphosphate + H(+). Its function is as follows. Pyrophosphatase that catalyzes the hydrolysis of nucleoside triphosphates to their monophosphate derivatives, with a high preference for the non-canonical purine nucleotides XTP (xanthosine triphosphate), dITP (deoxyinosine triphosphate) and ITP. Seems to function as a house-cleaning enzyme that removes non-canonical purine nucleotides from the nucleotide pool, thus preventing their incorporation into DNA/RNA and avoiding chromosomal lesions. This chain is dITP/XTP pyrophosphatase (rdgB), found in Shigella flexneri.